Consider the following 254-residue polypeptide: H-2 class II histocompatibility antigen, I-E alpha chain (254 aa).

The first 24 residues, 1–24 (RSRALILGVLALTTMLSLCGGEDD), serve as a signal peptide directing secretion. The alpha-1 stretch occupies residues 25 to 109 (IEADHVAFYG…KDSNFTPAAN (85 aa)). The Extracellular segment spans residues 25-216 (IEADHVAFYG…IPAPMSELTE (192 aa)). N-linked (GlcNAc...) asparagine glycans are attached at residues Asn103 and Asn143. An alpha-2 region spans residues 110 to 203 (EAPQATVFPK…GLEEPVLKHW (94 aa)). The Ig-like C1-type domain occupies 112–204 (PQATVFPKSP…LEEPVLKHWE (93 aa)). A disulfide bond links Cys132 and Cys188. The connecting peptide stretch occupies residues 204 to 216 (EPEIPAPMSELTE). Residues 217–242 (TVVCALGLSVGLVGIVVGTIFIIQGL) form a helical membrane-spanning segment. The Cytoplasmic portion of the chain corresponds to 243 to 254 (RSGGTSRHPGPL).

It belongs to the MHC class II family.

The protein resides in the membrane. This is H-2 class II histocompatibility antigen, I-E alpha chain from Mus musculus (Mouse).